Reading from the N-terminus, the 225-residue chain is Probable septum site-determining protein MinC (225 aa).

Belongs to the MinC family. In terms of assembly, interacts with MinD and FtsZ.

In terms of biological role, cell division inhibitor that blocks the formation of polar Z ring septums. Rapidly oscillates between the poles of the cell to destabilize FtsZ filaments that have formed before they mature into polar Z rings. Prevents FtsZ polymerization. This Listeria monocytogenes serotype 4a (strain HCC23) protein is Probable septum site-determining protein MinC.